Here is a 101-residue protein sequence, read N- to C-terminus: Chaperone modulatory protein CbpM (101 aa).

This sequence belongs to the CbpM family.

In terms of biological role, interacts with CbpA and inhibits both the DnaJ-like co-chaperone activity and the DNA binding activity of CbpA. Together with CbpA, modulates the activity of the DnaK chaperone system. Does not inhibit the co-chaperone activity of DnaJ. This chain is Chaperone modulatory protein CbpM, found in Citrobacter koseri (strain ATCC BAA-895 / CDC 4225-83 / SGSC4696).